We begin with the raw amino-acid sequence, 192 residues long: Ion-translocating oxidoreductase complex subunit A (192 aa).

Helical transmembrane passes span 5-25 (ILLI…FLGL), 39-59 (VGMG…AYLV), 63-83 (ILIP…VIAV), 102-122 (LLGI…VALL), 134-154 (VVYG…FAAL), and 171-191 (SIAL…TGLV).

It belongs to the NqrDE/RnfAE family. In terms of assembly, the complex is composed of six subunits: RnfA, RnfB, RnfC, RnfD, RnfE and RnfG.

It localises to the cell inner membrane. Its function is as follows. Part of a membrane-bound complex that couples electron transfer with translocation of ions across the membrane. The polypeptide is Ion-translocating oxidoreductase complex subunit A (Haemophilus influenzae (strain ATCC 51907 / DSM 11121 / KW20 / Rd)).